The chain runs to 431 residues: Phosphoribosylamine--glycine ligase (431 aa).

The region spanning 108-315 (KDFLARHKIP…LVLLIEAALA (208 aa)) is the ATP-grasp domain. Residue 134–195 (LREKGAPIVI…EEFLDGEEAS (62 aa)) coordinates ATP. The Mg(2+) site is built by glutamate 285 and asparagine 287.

This sequence belongs to the GARS family. Requires Mg(2+) as cofactor. It depends on Mn(2+) as a cofactor.

It catalyses the reaction 5-phospho-beta-D-ribosylamine + glycine + ATP = N(1)-(5-phospho-beta-D-ribosyl)glycinamide + ADP + phosphate + H(+). It participates in purine metabolism; IMP biosynthesis via de novo pathway; N(1)-(5-phospho-D-ribosyl)glycinamide from 5-phospho-alpha-D-ribose 1-diphosphate: step 2/2. The protein is Phosphoribosylamine--glycine ligase of Pseudomonas syringae pv. tomato (strain ATCC BAA-871 / DC3000).